The following is a 687-amino-acid chain: Mitochondrial 15S rRNA processing factor ppr3 (687 aa).

A mitochondrion-targeting transit peptide spans Met1 to Cys49. 4 PPR repeats span residues Asn262–Pro296, Ser297–Ile331, Ser334–Pro368, and Thr372–Pro407.

Belongs to the CCM1 family. As to quaternary structure, binds to mitochondrial small subunit 15S rRNA.

The protein localises to the mitochondrion. Regulates mitochondrial small subunit maturation by controlling 15S rRNA 5'-end processing. Localizes to the 5' precursor of the 15S rRNA in a position that is subsequently occupied by mS47 in the mature yeast mtSSU. Uses structure and sequence-specific RNA recognition, binding to a single-stranded region of the precursor and specifically recognizing bases -6 to -1. The exchange of Ccm1 for mS47 is coupled to the irreversible removal of precursor rRNA that is accompanied by conformational changes of the mitoribosomal proteins uS5m and mS26. These conformational changes signal completion of 5'-end rRNA processing through protection of the mature 5'-end of the 15S rRNA and stabilization of mS47. The removal of the 5' precursor together with the dissociation of Ccm1 may be catalyzed by the 5'-3' exoribonuclease Pet127. Involved in the specific removal of group I introns in mitochondrial encoded transcripts. In Schizosaccharomyces pombe (strain 972 / ATCC 24843) (Fission yeast), this protein is Mitochondrial 15S rRNA processing factor ppr3.